The sequence spans 135 residues: Small ribosomal subunit protein uS9 (135 aa).

The segment covering 108 to 118 (VGDPRRTEPHK) has biased composition (basic and acidic residues). The disordered stretch occupies residues 108–135 (VGDPRRTEPHKPNRSTKGPRAKRQKSYR). Residues 119-135 (PNRSTKGPRAKRQKSYR) are compositionally biased toward basic residues.

It belongs to the universal ribosomal protein uS9 family.

This is Small ribosomal subunit protein uS9 (rps9) from Pyrococcus abyssi (strain GE5 / Orsay).